Here is a 251-residue protein sequence, read N- to C-terminus: Carbohydrate deacetylase (251 aa).

Mg(2+) is bound by residues H59 and H122.

The protein belongs to the YdjC deacetylase family. In terms of assembly, homodimer. Mg(2+) is required as a cofactor.

Probably catalyzes the deacetylation of acetylated carbohydrates an important step in the degradation of oligosaccharides. This is Carbohydrate deacetylase from Vibrio parahaemolyticus serotype O3:K6 (strain RIMD 2210633).